The primary structure comprises 279 residues: Tryptophan synthase alpha chain (279 aa).

Residues glutamate 50 and aspartate 61 each act as proton acceptor in the active site.

Belongs to the TrpA family. In terms of assembly, tetramer of two alpha and two beta chains.

It catalyses the reaction (1S,2R)-1-C-(indol-3-yl)glycerol 3-phosphate + L-serine = D-glyceraldehyde 3-phosphate + L-tryptophan + H2O. It participates in amino-acid biosynthesis; L-tryptophan biosynthesis; L-tryptophan from chorismate: step 5/5. Its function is as follows. The alpha subunit is responsible for the aldol cleavage of indoleglycerol phosphate to indole and glyceraldehyde 3-phosphate. This Rhizobium etli (strain ATCC 51251 / DSM 11541 / JCM 21823 / NBRC 15573 / CFN 42) protein is Tryptophan synthase alpha chain.